The primary structure comprises 84 residues: Large ribosomal subunit protein bL27c (84 aa).

The interval 1-23 is disordered; the sequence is MAHKKGAGSTKNGRDSNAKRLGV.

It belongs to the bacterial ribosomal protein bL27 family.

It localises to the plastid. The protein localises to the chloroplast. This is Large ribosomal subunit protein bL27c from Thalassiosira pseudonana (Marine diatom).